We begin with the raw amino-acid sequence, 558 residues long: Cyclomaltodextrinase (558 aa).

Positions 143, 168, and 170 each coordinate Ca(2+). Substrate contacts are provided by H243 and R323. Catalysis depends on D325, which acts as the Nucleophile. E354 acts as the Proton donor in catalysis. Residues H420–D421, D465, and R469 contribute to the substrate site.

The protein belongs to the glycosyl hydrolase 13 family. In terms of assembly, monomer. Depending on the pH of the solution, exists as a monomer, a homodimer or as an assembly of six homodimers forming a dodecamer, which is catalytically the most efficient form of the enzyme. It depends on Ca(2+) as a cofactor.

It catalyses the reaction cyclomaltodextrin + H2O = linear maltodextrin. The catalysed reaction is Hydrolysis of pullulan to panose (6-alpha-D-glucosylmaltose).. Its activity is regulated as follows. Hydrolysis of beta-cyclodextrin is inhibited by Cu(2+), Zn(2+) and Ag(+), and activated by Ca(2+), EGTA and EDTA. Activity is increased over twofold in the presence of 5 mM EDTA. Competitively inhibited by acarbose and methyl 6-amino-6-deoxy-alpha-D-glucopyranoside by reducing the rate of the ring opening step of the reaction. In terms of biological role, hydrolyzes alpha-, beta- and gamma-cyclodextrins and the resulting linear maltodextrins, with the highest activity with beta-cyclodextrin (cyclomaltoheptaose). Soluble starch is hydrolyzed slowly, but it is nevertheless preferred over pullulan as a substrate. Is able to hydrolyze amylose and amylopectin, with a very strong preference for amylose, with maltose and glucose as the main products. Maltose and glucose are the main hydrolysis products of cyclomaltodextrins, maltodextrins and starch, whereas panose is the main hydrolysis product of pullulan. Acarbose is partially hydrolyzed to glucose and pseudotrisaccharide. No activity with maltose as substrate. Has transglycosylating activity with high concentrations of maltotriose, maltotetraose and starch. In Bacillus sp, this protein is Cyclomaltodextrinase.